A 289-amino-acid polypeptide reads, in one-letter code: Protein charybde (289 aa).

The disordered stretch occupies residues 119–142 (TAHHPGHGHGPGPSPMPASPLQST).

The protein belongs to the DDIT4 family.

The protein localises to the cytoplasm. Functionally, inhibits cell growth by regulating the Tor pathway upstream of the Tsc1-Tsc2 complex and downstream of Akt1. Acts as a cell death activator during head development. This Drosophila pseudoobscura pseudoobscura (Fruit fly) protein is Protein charybde (chrb).